Reading from the N-terminus, the 496-residue chain is L-arabinose isomerase (496 aa).

The Mn(2+) site is built by Glu306, Glu331, His348, and His447.

It belongs to the arabinose isomerase family. As to quaternary structure, homotetramer. The cofactor is Mn(2+).

It carries out the reaction beta-L-arabinopyranose = L-ribulose. The protein operates within carbohydrate degradation; L-arabinose degradation via L-ribulose; D-xylulose 5-phosphate from L-arabinose (bacterial route): step 1/3. Its activity is regulated as follows. Inhibited by copper. Its function is as follows. Catalyzes the conversion of L-arabinose to L-ribulose. In vitro, converts D-galactose into D-tagatose. This is L-arabinose isomerase (araA) from Geobacillus stearothermophilus (Bacillus stearothermophilus).